The sequence spans 763 residues: MKTSPRRPLILKRRRLPLPVQNAPSETSEEEPKRSPAQQESNQAEASKEVAESNSCKFPAGIKIINHPTMPNTQVVAIPNNANIHSIITALTAKGKESGSSGPNKFILISCGGAPTQPPGLRPQTQTSYDAKRTEVTLETLGPKPAARDVNLPRPPGALCEQKRETCADGEAAGCTINNSLSNIQWLRKMSSDGLGSRSIKQEMEEKENCHLEQRQVKVEEPSRPSASWQNSVSERPPYSYMAMIQFAINSTERKRMTLKDIYTWIEDHFPYFKHIAKPGWKNSIRHNLSLHDMFVRETSANGKVSFWTIHPSANRYLTLDQVFKPLDPGSPQLPEHLESQQKRPNPELRRNMTIKTELPLGARRKMKPLLPRVSSYLVPIQFPVNQSLVLQPSVKVPLPLAASLMSSELARHSKRVRIAPKVLLAEEGIAPLSSAGPGKEEKLLFGEGFSPLLPVQTIKEEEIQPGEEMPHLARPIKVESPPLEEWPSPAPSFKEESSHSWEDSSQSPTPRPKKSYSGLRSPTRCVSEMLVIQHRERRERSRSRRKQHLLPPCVDEPELLFSEGPSTSRWAAELPFPADSSDPASQLSYSQEVGGPFKTPIKETLPISSTPSKSVLPRTPESWRLTPPAKVGGLDFSPVQTSQGASDPLPDPLGLMDLSTTPLQSAPPLESPQRLLSSEPLDLISVPFGNSSPSDIDVPKPGSPEPQVSGLAANRSLTEGLVLDTMNDSLSKILLDISFPGLDEDPLGPDNINWSQFIPELQ.

The disordered stretch occupies residues Met-1 to Ser-53. A compositionally biased stretch (polar residues) spans Pro-36–Glu-45. Residues Lys-163, Lys-201, and Lys-325 each participate in a glycyl lysine isopeptide (Lys-Gly) (interchain with G-Cter in SUMO2) cross-link. A disordered region spans residues Arg-198–Ser-232. The span at Ile-200 to Ser-223 shows a compositional bias: basic and acidic residues. The fork-head DNA-binding region spans Glu-235–Leu-327. Residues Pro-329–Arg-351 form a disordered region. Residue Ser-331 is modified to Phosphoserine. Residues Glu-336 to Arg-351 show a composition bias toward basic and acidic residues. Lys-356 is covalently cross-linked (Glycyl lysine isopeptide (Lys-Gly) (interchain with G-Cter in SUMO2)). A Phosphoserine; by CHEK2 modification is found at Ser-376. Residues Lys-422 and Lys-440 each participate in a glycyl lysine isopeptide (Lys-Gly) (interchain with G-Cter in SUMO2) cross-link. Residues Pro-482–Gly-711 form a disordered region. Phosphoserine; by GSK3 is present on Ser-489. Over residues Phe-494–Glu-503 the composition is skewed to basic and acidic residues. Residue Ser-522 is modified to Phosphoserine. Residues Asp-583–Gln-592 are compositionally biased toward polar residues. Position 611 is a phosphothreonine; by CDK1 (Thr-611). Residues Thr-620, Thr-627, and Thr-662 each carry the phosphothreonine modification. Ser-693 carries the post-translational modification Phosphoserine; by CDK1. A phosphoserine; by PLK1 mark is found at Ser-730 and Ser-739.

Interacts with PINT87aa which is encoded by the circular form of the long non-coding RNA LINC-PINT; the interaction inhibits FOXM1-mediated transcription of PHB2. Phosphorylated in M (mitotic) phase. Phosphorylation by the checkpoint kinase CHEK2 in response to DNA damage increases the FOXM1 protein stability probably stimulating the transcription of genes involved in DNA repair. Phosphorylated by CDK1 in late S and G2 phases, creating docking sites for the POLO box domains of PLK1. Subsequently, PLK1 binds and phosphorylates FOXM1, leading to activation of transcriptional activity and subsequent enhanced expression of key mitotic regulators. Phosphorylated by GSK3B leading to ubiquitination and proteasomal degradation. In terms of processing, ubiquitinated in a FBXW7-dependent manner leading to proteasomal degradation. Expressed in thymus, testis, small intestine, colon followed by ovary. Appears to be expressed only in adult organs containing proliferating/cycling cells or in response to growth factors. Also expressed in epithelial cell lines derived from tumors. Not expressed in resting cells. Isoform 2 is highly expressed in testis.

It is found in the nucleus. Transcription factor regulating the expression of cell cycle genes essential for DNA replication and mitosis. Plays a role in the control of cell proliferation. Also plays a role in DNA break repair, participating in the DNA damage checkpoint response. Promotes transcription of PHB2. This is Forkhead box protein M1 (FOXM1) from Homo sapiens (Human).